Consider the following 478-residue polypeptide: Sodium-dependent phosphate transport protein 3 (478 aa).

Asparagine 28, asparagine 47, asparagine 56, and asparagine 69 each carry an N-linked (GlcNAc...) asparagine glycan. The next 10 helical transmembrane spans lie at 98–118 (ISYG…IFGA), 130–150 (SLLT…VIVI), 183–203 (SIAG…GGLI), 211–231 (FIFY…FTVI), 273–293 (LPLW…TIII), 317–337 (LPFI…DFLL), 341–361 (LLSL…LPSL), 363–383 (AVAL…LILI), 405–425 (YASF…IISS), and 442–462 (NVFF…LIFG).

It belongs to the major facilitator superfamily. Sodium/anion cotransporter family. In terms of tissue distribution, expressed in the liver, kidney, placenta, lung and thyroid (at protein level).

It is found in the apical cell membrane. The catalysed reaction is 3 Na(+)(out) + phosphate(out) = 3 Na(+)(in) + phosphate(in). It carries out the reaction urate(out) + n chloride(in) = urate(in) + n chloride(out). Its function is as follows. Acts as a membrane potential-dependent organic anion transporter, the transport requires a low concentration of chloride ions. Mediates chloride-dependent transport of urate. Can actively transport inorganic phosphate into cells via Na(+) cotransport. The chain is Sodium-dependent phosphate transport protein 3 (Slc17a2) from Mus musculus (Mouse).